Reading from the N-terminus, the 119-residue chain is Ribonuclease P protein component (119 aa).

It belongs to the RnpA family. As to quaternary structure, consists of a catalytic RNA component (M1 or rnpB) and a protein subunit.

The enzyme catalyses Endonucleolytic cleavage of RNA, removing 5'-extranucleotides from tRNA precursor.. Functionally, RNaseP catalyzes the removal of the 5'-leader sequence from pre-tRNA to produce the mature 5'-terminus. It can also cleave other RNA substrates such as 4.5S RNA. The protein component plays an auxiliary but essential role in vivo by binding to the 5'-leader sequence and broadening the substrate specificity of the ribozyme. In Erwinia tasmaniensis (strain DSM 17950 / CFBP 7177 / CIP 109463 / NCPPB 4357 / Et1/99), this protein is Ribonuclease P protein component.